Here is a 159-residue protein sequence, read N- to C-terminus: bZIP transcription factor 11 (159 aa).

The span at 1–21 (MESSSSGTTSSTIQTSSGSEE) shows a compositional bias: low complexity. The segment at 1–47 (MESSSSGTTSSTIQTSSGSEESLMEQRKRKRMLSNRESARRSRMKKQ) is disordered. Residues 25–88 (EQRKRKRMLS…LTVEAENSVL (64 aa)) enclose the bZIP domain. Residues 27–48 (RKRKRMLSNRESARRSRMKKQK) are basic motif. A leucine-zipper region spans residues 53–67 (LTAQVNHLKKENTEI).

As to quaternary structure, forms heterodimers with BZIP1, BZIP9, BZIP10, BZIP25 and BZIP63. Interacts with ADA2B. In terms of tissue distribution, highly expressed in stems and flowers. Expressed in root tips, cotyledons, leaf vasculature, embryos, apical parts of siliques and funiculi.

It localises to the nucleus. Its function is as follows. Transcription factor that binds to the DNA sequence 5'-ACTCAT-3' in target gene promoters. Promotes POX1/PRODH1 expression in response to hypoosmolarity stress. Positively regulates the expression of ASN1 and POX2/PRODH2 genes, which are involved in amino acid metabolism. Regulates several metabolic pathways such as myo-inositol, raffinose and trehalose. Regulates several trehalose metabolism genes, including TRE1, TPP5 and TPP6. Mediates recruitment of the histone acetylation machinery to activate auxin-induced transcription. Interacts with ADA2B adapter protein to promote ADA2B-mediated recruitment of SAGA-like histone acetyltransferase complexes to specific auxin-responsive genes. The protein is bZIP transcription factor 11 of Arabidopsis thaliana (Mouse-ear cress).